Consider the following 182-residue polypeptide: Sec-independent protein translocase protein TatB (182 aa).

Residues methionine 1 to glycine 21 form a helical membrane-spanning segment. Disordered regions lie at residues glutamine 87–glutamate 107 and threonine 121–proline 182. A compositionally biased stretch (low complexity) spans alanine 168–proline 182.

It belongs to the TatB family. As to quaternary structure, the Tat system comprises two distinct complexes: a TatABC complex, containing multiple copies of TatA, TatB and TatC subunits, and a separate TatA complex, containing only TatA subunits. Substrates initially bind to the TatABC complex, which probably triggers association of the separate TatA complex to form the active translocon.

It is found in the cell inner membrane. Its function is as follows. Part of the twin-arginine translocation (Tat) system that transports large folded proteins containing a characteristic twin-arginine motif in their signal peptide across membranes. Together with TatC, TatB is part of a receptor directly interacting with Tat signal peptides. TatB may form an oligomeric binding site that transiently accommodates folded Tat precursor proteins before their translocation. The protein is Sec-independent protein translocase protein TatB of Salmonella choleraesuis (strain SC-B67).